The sequence spans 342 residues: ATP-dependent (S)-NAD(P)H-hydrate dehydratase (342 aa).

A YjeF C-terminal domain is found at 11-337; it reads ILPALEKVVP…EYLGHRLFTF (327 aa). (6S)-NADPHX-binding positions include G127 and 180–186; that span reads NVMEHKR. Residues 229-233 and 248-257 each bind ATP; these read KGKTD and GSPRRCGGQG. Residue D258 participates in (6S)-NADPHX binding.

Belongs to the NnrD/CARKD family. Requires Mg(2+) as cofactor.

The catalysed reaction is (6S)-NADHX + ATP = ADP + phosphate + NADH + H(+). It carries out the reaction (6S)-NADPHX + ATP = ADP + phosphate + NADPH + H(+). In terms of biological role, catalyzes the dehydration of the S-form of NAD(P)HX at the expense of ATP, which is converted to ADP. Together with NAD(P)HX epimerase, which catalyzes the epimerization of the S- and R-forms, the enzyme allows the repair of both epimers of NAD(P)HX, a damaged form of NAD(P)H that is a result of enzymatic or heat-dependent hydration. This is ATP-dependent (S)-NAD(P)H-hydrate dehydratase from Physcomitrium patens (Spreading-leaved earth moss).